Here is a 286-residue protein sequence, read N- to C-terminus: MKITDHKLSEGIALTFRVPEGNIKHPLIILCHGFCGIRNVLLPCFANAFTEAGFATITFDYRGFGESDGERGRLVPAMQTEDIISVINWAEKQECIDNQRIGLWGTSLGGGHVFSAAAQDQRVKCIVSQLAFADGDVLVTGEMNESERASFLSTLNKMAEKKKNTGKEMFVGVTRVLSDNESKVFFEKVKGQYPEMDIKIPFLTVMETLQYKPAESAAKVQCPVLIVIAGQDSVNPPEQGKALYDAVASGTKELYEEADACHYDIYEGAFFERVAAVQTQWFKKHL.

An AB hydrolase-1 domain is found at 26–268 (PLIILCHGFC…DACHYDIYEG (243 aa)).

Belongs to the AB hydrolase superfamily.

This is an uncharacterized protein from Escherichia coli.